Consider the following 505-residue polypeptide: E3 SUMO-protein ligase PIAS4-A (505 aa).

The region spanning 12-46 (VKSFRVSDLQTLLASMGRSKSGLKQDLVGRALRLV) is the SAP domain. An LXXLL motif motif is present at residues 20–24 (LQTLL). Residue Lys-35 forms a Glycyl lysine isopeptide (Lys-Gly) (interchain with G-Cter in SUMO); alternate linkage. Lys-35 participates in a covalent cross-link: Glycyl lysine isopeptide (Lys-Gly) (interchain with G-Cter in SUMO2); alternate. Glycyl lysine isopeptide (Lys-Gly) (interchain with G-Cter in SUMO2) cross-links involve residues Lys-56 and Lys-68. The PINIT domain maps to 104 to 264 (GIPKPAPPPA…SVAVYLVRVF (161 aa)). Residues 296-381 (PESEIATTGL…LKETPEDVEE (86 aa)) form an SP-RING-type zinc finger. Zn(2+) is bound by residues Cys-327, His-329, Cys-350, and Cys-353. Residues 374 to 505 (ETPEDVEEIE…DYDKDLVTAY (132 aa)) form a required for nuclear localization region. A compositionally biased stretch (basic and acidic residues) spans 395 to 407 (DDKEKERERENSR). Residues 395-505 (DDKEKERERE…DYDKDLVTAY (111 aa)) form a disordered region. The span at 437–457 (SGSGGASAGTGSTSGGSGGGT) shows a compositional bias: gly residues. Over residues 462–485 (TLDDSSEEEGGGGAEDSEETDDSQ) the composition is skewed to acidic residues. The segment covering 493 to 505 (GRYDYDKDLVTAY) has biased composition (basic and acidic residues).

The protein belongs to the PIAS family. Post-translationally, sumoylated. Lys-35 is the main site of sumoylation. In terms of tissue distribution, highly expressed in spleen, liver, and brain. Expressed at lower levels in heart, intestine, kidney, gill, skin, and muscle.

Its subcellular location is the nucleus. The enzyme catalyses S-ubiquitinyl-[E2 ubiquitin-conjugating enzyme]-L-cysteine + [acceptor protein]-L-lysine = [E2 ubiquitin-conjugating enzyme]-L-cysteine + N(6)-ubiquitinyl-[acceptor protein]-L-lysine.. It functions in the pathway protein modification; protein sumoylation. Functionally, functions as an E3-type small ubiquitin-like modifier (SUMO) ligase. May play a role as a transcriptional coregulator in various cellular pathways. Catalyzes conjugation of SUMO2 to KAT5 in response to DNA damage, facilitating repair of DNA double-strand breaks (DSBs) via homologous recombination (HR). Mediates sumoylation of PARP1 in response to PARP1 trapping to chromatin. Negatively regulates induction of interferon phi 1 (ifnphi1) mediated by mavs and ticam1/trif. Also inhibits ifnphi1-mediated activation of the interferon-stimulated genes (ISGs) pkz and cd40, and to a lesser extent rsad2 and isg15. May inhibit ticam1/trif-mediated activation of NF-kappa-B. The protein is E3 SUMO-protein ligase PIAS4-A of Danio rerio (Zebrafish).